Consider the following 141-residue polypeptide: ATP synthase epsilon chain (141 aa).

Belongs to the ATPase epsilon chain family. As to quaternary structure, F-type ATPases have 2 components, CF(1) - the catalytic core - and CF(0) - the membrane proton channel. CF(1) has five subunits: alpha(3), beta(3), gamma(1), delta(1), epsilon(1). CF(0) has three main subunits: a, b and c.

Its subcellular location is the cell inner membrane. Produces ATP from ADP in the presence of a proton gradient across the membrane. This is ATP synthase epsilon chain from Desulfatibacillum aliphaticivorans.